A 288-amino-acid chain; its full sequence is Transformer-2 protein homolog beta (288 aa).

Disordered regions lie at residues 1 to 114 (MSDS…RANP) and 196 to 225 (TKRP…YDRG). S2 carries the N-acetylserine modification. Phosphoserine occurs at positions 2, 4, and 14. Residues 17–28 (ASRSGSAHGSGK) are compositionally biased toward low complexity. Phosphoserine is present on S29. T33 is subject to Phosphothreonine. A compositionally biased stretch (basic residues) spans 59–109 (RSRRSSRRHYTRSRSRSRSHRRSRSRSYSRDYRRRHSHSHSPMSTRRRHVG). A phosphoserine mark is found at S83, S85, S87, S95, S97, and S99. T103 is modified (phosphothreonine). Residues 118-196 (CCLGVFGLSL…RRIRVDFSIT (79 aa)) enclose the RRM domain. Positions 193–230 (FSITKRPHTPTPGIYMGRPTYGSSRRRDYYDRGYDRGY) are linker. A Glycyl lysine isopeptide (Lys-Gly) (interchain with G-Cter in SUMO2) cross-link involves residue K197. Phosphothreonine occurs at positions 201 and 203. 2 positions are modified to phosphoserine: S215 and S237. At R241 the chain carries Asymmetric dimethylarginine; alternate. R241 is subject to Dimethylated arginine; alternate. The residue at position 241 (R241) is an Omega-N-methylarginine; alternate. Residues 242–288 (GGGGGGGGWRAAQDRDQIYRRRSPSPYYSRGGYRSRSRSRSYSPRRY) are disordered. Residues 274 to 288 (YRSRSRSRSYSPRRY) are compositionally biased toward basic residues.

The protein belongs to the splicing factor SR family. Found in a pre-mRNA exonic splicing enhancer (ESE) complex with TRA2B/SFRS10, SNRNP70, SNRPA1 and SRRM1. Binds to A3 enhancer proteins SFRS4, SFRS5, SFRS6 and SFRS9. Interacts with CPSF6, RBMY1A1, RBMX, RNPS1 and phosphorylated SFRS13A. Interacts with SAFB/SAFB1. Interacts with ILDR1 (via C-terminus) and ILDR2. Phosphorylated in the RS domains.

Its subcellular location is the nucleus. Sequence-specific RNA-binding protein which participates in the control of pre-mRNA splicing. Can either activate or suppress exon inclusion. Acts additively with RBMX to promote exon 7 inclusion of the survival motor neuron SMN2. Activates the splicing of MAPT/Tau exon 10. Alters pre-mRNA splicing patterns by antagonizing the effects of splicing regulators, like RBMX. Binds to the AG-rich SE2 domain in the SMN exon 7 RNA. Binds to pre-mRNA. The polypeptide is Transformer-2 protein homolog beta (TRA2B) (Bos taurus (Bovine)).